The sequence spans 262 residues: tRNA pseudouridine synthase A (262 aa).

Aspartate 56 serves as the catalytic Nucleophile. Residue tyrosine 114 participates in substrate binding.

This sequence belongs to the tRNA pseudouridine synthase TruA family. Homodimer.

It catalyses the reaction uridine(38/39/40) in tRNA = pseudouridine(38/39/40) in tRNA. In terms of biological role, formation of pseudouridine at positions 38, 39 and 40 in the anticodon stem and loop of transfer RNAs. The sequence is that of tRNA pseudouridine synthase A from Lactiplantibacillus plantarum (strain ATCC BAA-793 / NCIMB 8826 / WCFS1) (Lactobacillus plantarum).